A 408-amino-acid polypeptide reads, in one-letter code: Formate-dependent phosphoribosylglycinamide formyltransferase (408 aa).

Residues 25–26 (EL) and Glu85 each bind N(1)-(5-phospho-beta-D-ribosyl)glycinamide. ATP contacts are provided by residues Arg118, Lys159, 164–169 (SSGKGQ), 199–202 (EAFV), and Glu207. In terms of domain architecture, ATP-grasp spans 123-318 (KLAAEELGLP…EFELHAKAIL (196 aa)). Positions 277 and 289 each coordinate Mg(2+). N(1)-(5-phospho-beta-D-ribosyl)glycinamide contacts are provided by residues Asp296, Lys365, and 372–373 (RR).

This sequence belongs to the PurK/PurT family. In terms of assembly, homodimer.

The enzyme catalyses N(1)-(5-phospho-beta-D-ribosyl)glycinamide + formate + ATP = N(2)-formyl-N(1)-(5-phospho-beta-D-ribosyl)glycinamide + ADP + phosphate + H(+). It participates in purine metabolism; IMP biosynthesis via de novo pathway; N(2)-formyl-N(1)-(5-phospho-D-ribosyl)glycinamide from N(1)-(5-phospho-D-ribosyl)glycinamide (formate route): step 1/1. Functionally, involved in the de novo purine biosynthesis. Catalyzes the transfer of formate to 5-phospho-ribosyl-glycinamide (GAR), producing 5-phospho-ribosyl-N-formylglycinamide (FGAR). Formate is provided by PurU via hydrolysis of 10-formyl-tetrahydrofolate. The polypeptide is Formate-dependent phosphoribosylglycinamide formyltransferase (Corynebacterium glutamicum (strain R)).